The sequence spans 508 residues: WD repeat-containing protein JIP5 (508 aa).

WD repeat units follow at residues 46-94, 105-144, 150-189, 194-234, 252-293, and 344-381; these read LATG…GVET, RHKGSVRCICFDADGTHIYSVGTDNVLKKADTLTGKVVKK, GQNVKYTKLVKSATHPLVLLGDENGNVTVLNSESLEQTNL, HNGD…EGDF, DQED…LADQ, and SKLDEVTFLDLDSEYRLLSGGLDKAKLWDSEKSEQLTP. The interval 372 to 508 is disordered; sequence DSEKSEQLTP…THGIRRFEGL (137 aa). A compositionally biased stretch (basic and acidic residues) spans 491 to 508; that stretch reads IKPERSMKTHGIRRFEGL.

Belongs to the WD repeat WDR55 family.

It is found in the nucleus. The protein resides in the nucleolus. The sequence is that of WD repeat-containing protein JIP5 (JIP5) from Eremothecium gossypii (strain ATCC 10895 / CBS 109.51 / FGSC 9923 / NRRL Y-1056) (Yeast).